We begin with the raw amino-acid sequence, 229 residues long: uncharacterized protein (229 aa).

In terms of domain architecture, ABC transporter spans 2-229 (LTLNNISKSY…LDERGDISHA (228 aa)). 38–45 (GPSGSGKS) contacts ATP.

The protein belongs to the ABC transporter superfamily.

This is an uncharacterized protein from Bacillus subtilis (strain 168).